We begin with the raw amino-acid sequence, 125 residues long: Histone H2A, orphon (125 aa).

A compositionally biased stretch (basic residues) spans 1–18 (MSGRGKGGKVKAKAKSRS). The tract at residues 1 to 21 (MSGRGKGGKVKAKAKSRSSRA) is disordered. The residue at position 2 (Ser2) is an N-acetylserine. At Ser2 the chain carries Phosphoserine. Lys119 participates in a covalent cross-link: Glycyl lysine isopeptide (Lys-Gly) (interchain with G-Cter in ubiquitin).

It belongs to the histone H2A family. In terms of assembly, the nucleosome is a histone octamer containing two molecules each of H2A, H2B, H3 and H4 assembled in one H3-H4 heterotetramer and two H2A-H2B heterodimers. The octamer wraps approximately 147 bp of DNA. Monoubiquitination of Lys-119 gives a specific tag for epigenetic transcriptional repression. Post-translationally, phosphorylation on Ser-2 is enhanced during mitosis. Phosphorylation on Ser-2 directly represses transcription.

Its subcellular location is the nucleus. The protein localises to the chromosome. In terms of biological role, core component of nucleosome. Nucleosomes wrap and compact DNA into chromatin, limiting DNA accessibility to the cellular machineries which require DNA as a template. Histones thereby play a central role in transcription regulation, DNA repair, DNA replication and chromosomal stability. DNA accessibility is regulated via a complex set of post-translational modifications of histones, also called histone code, and nucleosome remodeling. The sequence is that of Histone H2A, orphon from Chironomus thummi thummi (Midge).